The chain runs to 75 residues: MFTLKKPLLLLFFLGTISLSLCQEERDADEEEGEMIEEEVKRSLLGTVKDLLIGAGKSAAQSVLKGLSCKLSKDC.

The signal sequence occupies residues 1–22 (MFTLKKPLLLLFFLGTISLSLC). Positions 23–40 (QEERDADEEEGEMIEEEV) are excised as a propeptide. C69 and C75 are oxidised to a cystine.

This sequence belongs to the frog skin active peptide (FSAP) family. Brevinin subfamily. In terms of tissue distribution, expressed by the skin glands.

Its subcellular location is the secreted. Functionally, has antimicrobial activity against some Gram-positive bacteria and fungi but has no activity against a range of Gram-negative bacteria except P.faecalis. Has antimicrobial activity against the Gram-positive bacteria S.aureus ATCC 25923 (MIC=19 uM), B.licheniformis X39 (MIC=37.5 uM) and R.rhodochrous X15 (MIC=9.5 uM), is virtually inactive against E.faecium 091299 (MIC=150 uM) and S.carnosus KHS (MIC=150 uM) and inactive against E.faecalis 981. Active against the Gram-negative bacterium P.faecalis X29 (MIC=9.5 uM) and is inactive against E.coli, P.aeruginosa and S.typhi. Active against C.albicans ATCC 2002 (MIC=19 uM) and is also active against the slime mold 090223 (MIC=37.5 uM). Has extremely low hemolytic activity against human erythrocytes (LC(50)=300 uM). The sequence is that of Brevinin-2HS2A from Odorrana hainanensis (Odor frog).